Reading from the N-terminus, the 177-residue chain is Small ribosomal subunit protein bS21m (177 aa).

The transit peptide at 1-17 (MLKSTLRLSRISLRRGF) directs the protein to the mitochondrion.

Belongs to the bacterial ribosomal protein bS21 family. In terms of assembly, component of the mitochondrial small ribosomal subunit (mt-SSU). Mature yeast 74S mitochondrial ribosomes consist of a small (37S) and a large (54S) subunit. The 37S small subunit contains a 15S ribosomal RNA (15S mt-rRNA) and 34 different proteins. The 54S large subunit contains a 21S rRNA (21S mt-rRNA) and 46 different proteins.

The protein resides in the mitochondrion. Functionally, component of the mitochondrial ribosome (mitoribosome), a dedicated translation machinery responsible for the synthesis of mitochondrial genome-encoded proteins, including at least some of the essential transmembrane subunits of the mitochondrial respiratory chain. The mitoribosomes are attached to the mitochondrial inner membrane and translation products are cotranslationally integrated into the membrane. This Saccharomyces cerevisiae (strain ATCC 204508 / S288c) (Baker's yeast) protein is Small ribosomal subunit protein bS21m (MRP21).